The following is a 613-amino-acid chain: Cysteine--tRNA ligase (613 aa).

Residues 1-130 are disordered; that stretch reads MSAGAGTPRR…TRGGVARSGN (130 aa). 6 tandem repeats follow at residues 36–49, 50–63, 64–77, 78–91, 92–105, and 106–119. Positions 36 to 119 are 6 X 14 AA tandem repeats of P-[TA]-R-G-D-K-K-R-A-[RP]-R-[PL]-G-V; it reads PTRGDKKRAR…DKKRARRPGV (84 aa). Positions 148–613 are cysteinyl-tRNA synthetase; sequence VTIRLYDTSA…QGPRWSLGSR (466 aa). Residue C176 participates in Zn(2+) binding. Positions 178-188 match the 'HIGH' region motif; that stretch reads ATVQAAPHIGH. Residues C355, H380, and E384 each coordinate Zn(2+). A 'KMSKS' region motif is present at residues 411–415; that stretch reads KMSKS. K414 lines the ATP pocket.

The protein belongs to the class-I aminoacyl-tRNA synthetase family. In terms of assembly, monomer. The cofactor is Zn(2+).

Its subcellular location is the cytoplasm. It carries out the reaction tRNA(Cys) + L-cysteine + ATP = L-cysteinyl-tRNA(Cys) + AMP + diphosphate. This is Cysteine--tRNA ligase from Streptomyces coelicolor (strain ATCC BAA-471 / A3(2) / M145).